Here is a 121-residue protein sequence, read N- to C-terminus: Group 1 truncated hemoglobin (121 aa).

An N-acetylmethionine modification is found at M1. H73 contributes to the heme binding site.

The protein belongs to the truncated hemoglobin family. Group I subfamily. In terms of assembly, monomer. Requires heme as cofactor.

This chain is Group 1 truncated hemoglobin, found in Tetrahymena pyriformis.